Reading from the N-terminus, the 23-residue chain is Coenzyme PQQ synthesis protein A (23 aa).

Positions Glu-15–Tyr-19 form a cross-link, pyrroloquinoline quinone (Glu-Tyr).

The protein belongs to the PqqA family.

It participates in cofactor biosynthesis; pyrroloquinoline quinone biosynthesis. Its function is as follows. Required for coenzyme pyrroloquinoline quinone (PQQ) biosynthesis. PQQ is probably formed by cross-linking a specific glutamate to a specific tyrosine residue and excising these residues from the peptide. This is Coenzyme PQQ synthesis protein A from Pseudomonas putida (strain W619).